A 421-amino-acid chain; its full sequence is UDP-N-acetylglucosamine 1-carboxyvinyltransferase (421 aa).

22–23 (KN) serves as a coordination point for phosphoenolpyruvate. R93 contacts UDP-N-acetyl-alpha-D-glucosamine. C117 functions as the Proton donor in the catalytic mechanism. Residue C117 is modified to 2-(S-cysteinyl)pyruvic acid O-phosphothioketal. Residues 122-126 (RPVDL), D308, and V330 each bind UDP-N-acetyl-alpha-D-glucosamine.

This sequence belongs to the EPSP synthase family. MurA subfamily.

It is found in the cytoplasm. The catalysed reaction is phosphoenolpyruvate + UDP-N-acetyl-alpha-D-glucosamine = UDP-N-acetyl-3-O-(1-carboxyvinyl)-alpha-D-glucosamine + phosphate. It functions in the pathway cell wall biogenesis; peptidoglycan biosynthesis. Its function is as follows. Cell wall formation. Adds enolpyruvyl to UDP-N-acetylglucosamine. The sequence is that of UDP-N-acetylglucosamine 1-carboxyvinyltransferase from Stutzerimonas stutzeri (strain A1501) (Pseudomonas stutzeri).